Here is an 852-residue protein sequence, read N- to C-terminus: Replication factor C small subunit (852 aa).

The DOD-type homing endonuclease domain maps to 183–306 (WLGYFMGSGY…IAYALASFGI (124 aa)).

This sequence belongs to the activator 1 small subunits family. RfcS subfamily. As to quaternary structure, heteromultimer composed of three to four small subunits (RfcS) and one to two large subunits (RfcL). This protein undergoes a protein self splicing that involves a post-translational excision of the intervening region (intein) followed by peptide ligation.

Part of the RFC clamp loader complex which loads the PCNA sliding clamp onto DNA. The complex possesses DNA-dependent ATPase activity which is further stimulated by PCNA. The protein is Replication factor C small subunit (rfcS) of Pyrococcus furiosus (strain ATCC 43587 / DSM 3638 / JCM 8422 / Vc1).